The primary structure comprises 196 residues: Pyridoxal 5'-phosphate synthase subunit PdxT (196 aa).

Gly47–Ser49 contributes to the L-glutamine binding site. Cys79 serves as the catalytic Nucleophile. Residues Arg106 and Ile134–Arg135 each bind L-glutamine. Catalysis depends on charge relay system residues His170 and Glu172.

Belongs to the glutaminase PdxT/SNO family. In the presence of PdxS, forms a dodecamer of heterodimers. Only shows activity in the heterodimer.

It catalyses the reaction aldehydo-D-ribose 5-phosphate + D-glyceraldehyde 3-phosphate + L-glutamine = pyridoxal 5'-phosphate + L-glutamate + phosphate + 3 H2O + H(+). It carries out the reaction L-glutamine + H2O = L-glutamate + NH4(+). The protein operates within cofactor biosynthesis; pyridoxal 5'-phosphate biosynthesis. Its function is as follows. Catalyzes the hydrolysis of glutamine to glutamate and ammonia as part of the biosynthesis of pyridoxal 5'-phosphate. The resulting ammonia molecule is channeled to the active site of PdxS. The sequence is that of Pyridoxal 5'-phosphate synthase subunit PdxT from Bacillus licheniformis (strain ATCC 14580 / DSM 13 / JCM 2505 / CCUG 7422 / NBRC 12200 / NCIMB 9375 / NCTC 10341 / NRRL NRS-1264 / Gibson 46).